A 427-amino-acid polypeptide reads, in one-letter code: Peptidase B (427 aa).

Mn(2+)-binding residues include K195 and D200. Residue K207 is part of the active site. Mn(2+)-binding residues include D218, D277, and E279. R281 is an active-site residue.

Belongs to the peptidase M17 family. As to quaternary structure, homohexamer. Mn(2+) is required as a cofactor.

It is found in the cytoplasm. It catalyses the reaction Release of an N-terminal amino acid, Xaa, from a peptide or arylamide. Xaa is preferably Glu or Asp but may be other amino acids, including Leu, Met, His, Cys and Gln.. In terms of biological role, probably plays an important role in intracellular peptide degradation. This Shigella dysenteriae serotype 1 (strain Sd197) protein is Peptidase B.